The following is a 278-amino-acid chain: Ribosomal RNA small subunit methyltransferase A (278 aa).

6 residues coordinate S-adenosyl-L-methionine: asparagine 27, leucine 29, glycine 54, glutamate 75, aspartate 95, and asparagine 118.

This sequence belongs to the class I-like SAM-binding methyltransferase superfamily. rRNA adenine N(6)-methyltransferase family. RsmA subfamily.

It localises to the cytoplasm. The catalysed reaction is adenosine(1518)/adenosine(1519) in 16S rRNA + 4 S-adenosyl-L-methionine = N(6)-dimethyladenosine(1518)/N(6)-dimethyladenosine(1519) in 16S rRNA + 4 S-adenosyl-L-homocysteine + 4 H(+). Functionally, specifically dimethylates two adjacent adenosines (A1518 and A1519) in the loop of a conserved hairpin near the 3'-end of 16S rRNA in the 30S particle. May play a critical role in biogenesis of 30S subunits. The polypeptide is Ribosomal RNA small subunit methyltransferase A (Chlamydia caviae (strain ATCC VR-813 / DSM 19441 / 03DC25 / GPIC) (Chlamydophila caviae)).